Consider the following 226-residue polypeptide: Phosphoglycolate phosphatase (226 aa).

Asp12 functions as the Nucleophile in the catalytic mechanism. Mg(2+) contacts are provided by Asp12, Asp14, and Asp177.

It belongs to the HAD-like hydrolase superfamily. CbbY/CbbZ/Gph/YieH family. It depends on Mg(2+) as a cofactor.

The enzyme catalyses 2-phosphoglycolate + H2O = glycolate + phosphate. Its pathway is organic acid metabolism; glycolate biosynthesis; glycolate from 2-phosphoglycolate: step 1/1. Specifically catalyzes the dephosphorylation of 2-phosphoglycolate. Is involved in the dissimilation of the intracellular 2-phosphoglycolate formed during the DNA repair of 3'-phosphoglycolate ends, a major class of DNA lesions induced by oxidative stress. The sequence is that of Phosphoglycolate phosphatase from Colwellia psychrerythraea (strain 34H / ATCC BAA-681) (Vibrio psychroerythus).